A 458-amino-acid chain; its full sequence is MALWGGRFTQAADQRFKQFNDSLRFDYRLAEQDIVGSVAWSKALVTVGVLTADEQRQLEEALNVLLEEVRANPQQILQSDAEDIHSWVEGKLIDKVGQLGKKLHTGRSRNDQVATDLKLWCKETVRELLTANRQLQSALVETAQANQDAVMPGYTHLQRAQPVTFAHWCLAYVEMLARDESRLQDTLKRLDVSPLGCGALAGTAYEIDREQLAGWLGFTSATRNSLDSVSDRDHVLELLSDAAIGMVHLSRFAEDLIFFNSGEAGFVELSDRVTSGSSLMPQKKNPDALELIRGKCGRVQGALTGMMMTLKGLPLAYNKDMQEDKEGLFDALDTWLDCLHMAALVLDGIQVKRPRCQDAAQQGYANATELADYLVAKGVPFREAHHIVGEAVVEAIRQGKPLEALPLADLQKFSRVIGDDVYPILSLQSCLDKRAAKGGVSPLQVAQAINDAKARLAL.

This sequence belongs to the lyase 1 family. Argininosuccinate lyase subfamily.

It is found in the cytoplasm. The enzyme catalyses 2-(N(omega)-L-arginino)succinate = fumarate + L-arginine. Its pathway is amino-acid biosynthesis; L-arginine biosynthesis; L-arginine from L-ornithine and carbamoyl phosphate: step 3/3. The protein is Argininosuccinate lyase of Salmonella typhimurium (strain LT2 / SGSC1412 / ATCC 700720).